Consider the following 529-residue polypeptide: Non-reducing end alpha-L-arabinofuranosidase BoGH43B (529 aa).

An N-terminal signal peptide occupies residues 1–23; it reads MMKNSCRLLLILIGLWMANVSLA. D38 (proton acceptor) is an active-site residue. E198 serves as the catalytic Proton donor.

The protein belongs to the glycosyl hydrolase 43 family.

Its subcellular location is the periplasm. It catalyses the reaction Hydrolysis of terminal non-reducing alpha-L-arabinofuranoside residues in alpha-L-arabinosides.. It participates in glucan metabolism; xyloglucan degradation. Alpha-L-arabinofuranosidase involved in xyloglucan degradation by mediating the cleavage of terminal non-reducing alpha-L-arabinofuranoside residues in xyloglucan branches, converting the 'S' units to 'X' units. The chain is Non-reducing end alpha-L-arabinofuranosidase BoGH43B from Bacteroides ovatus (strain ATCC 8483 / DSM 1896 / JCM 5824 / BCRC 10623 / CCUG 4943 / NCTC 11153).